The primary structure comprises 238 residues: tRNA (guanine-N(1)-)-methyltransferase (238 aa).

S-adenosyl-L-methionine contacts are provided by residues G108 and 127-132 (LGDFVL).

The protein belongs to the RNA methyltransferase TrmD family. Homodimer.

It localises to the cytoplasm. It carries out the reaction guanosine(37) in tRNA + S-adenosyl-L-methionine = N(1)-methylguanosine(37) in tRNA + S-adenosyl-L-homocysteine + H(+). Functionally, specifically methylates guanosine-37 in various tRNAs. The protein is tRNA (guanine-N(1)-)-methyltransferase of Streptococcus uberis (strain ATCC BAA-854 / 0140J).